We begin with the raw amino-acid sequence, 374 residues long: Hydroxylysine kinase (374 aa).

Aspartate 228 acts as the Proton acceptor in catalysis.

The protein belongs to the aminoglycoside phosphotransferase family.

The protein resides in the cytoplasm. It catalyses the reaction (5R)-5-hydroxy-L-lysine + GTP = (5R)-5-phosphooxy-L-lysine + GDP + H(+). Functionally, catalyzes the GTP-dependent phosphorylation of 5-hydroxy-L-lysine. The polypeptide is Hydroxylysine kinase (hykk) (Xenopus laevis (African clawed frog)).